A 765-amino-acid polypeptide reads, in one-letter code: Endosialin (765 aa).

An N-terminal signal peptide occupies residues 1 to 17; the sequence is MLLRLLLAWVAAVPALG. The Extracellular portion of the chain corresponds to 18–695; that stretch reads QVPWTPEPRA…GQSQRDDRWL (678 aa). Residues 30–156 form the C-type lectin domain; that stretch reads GPSSCYALFP…CTLAVDGYLC (127 aa). 6 disulfide bridges follow: Cys131–Cys147, Cys164–Cys213, Cys203–Cys230, Cys316–Cys326, Cys322–Cys335, and Cys337–Cys350. The 71-residue stretch at 162-232 folds into the Sushi domain; that stretch reads GACPALPLEV…WSQTGPLCPG (71 aa). The region spanning 312–351 is the EGF-like; calcium-binding domain; the sequence is DTDECQIAGVCQQMCVNYVGGFECYCSEGHELEADGISCS. O-linked (GalNAc...) threonine glycans are attached at residues Thr401, Thr428, Thr448, Thr456, Thr459, and Thr466. O-linked (GalNAc...) serine glycans are attached at residues Ser467 and Ser470. Residue Thr472 is glycosylated (O-linked (GalNAc...) threonine). Residue Ser477 is glycosylated (O-linked (GalNAc...) serine). O-linked (GalNAc...) threonine glycans are attached at residues Thr488, Thr517, Thr520, Thr535, Thr552, Thr554, Thr556, Thr570, Thr571, Thr604, and Thr613. Positions 548–675 are disordered; sequence MSPDTHTITY…QLPSVPSTAA (128 aa). Positions 622-633 are enriched in pro residues; the sequence is PAFPSSPLPPQR. Residues Ser626 and Ser627 are each glycosylated (O-linked (GalNAc...) serine). O-linked (GalNAc...) threonine glycans are attached at residues Thr635 and Thr638. The span at 635 to 647 shows a compositional bias: polar residues; sequence TNQTSSISPTHSY. O-linked (GalNAc...) serine glycans are attached at residues Ser639 and Ser640. The O-linked (GalNAc...) threonine glycan is linked to Thr644. The O-linked (GalNAc...) serine glycan is linked to Ser663. An O-linked (GalNAc...) threonine glycan is attached at Thr673. A helical transmembrane segment spans residues 696–716; sequence LVALLVPTCVFLVVLLALGIV. The Cytoplasmic segment spans residues 717 to 765; that stretch reads YCTRCGSHAPNKRITDCYRWVTHAGNKSSTEPMPPRGSLTGVQTCRTSV. At Ser754 the chain carries Phosphoserine.

As to quaternary structure, interacts with PDGFRA; this interaction promotes PDGF receptor signaling pathway. Interacts with integrin beta-1/ITGB1. Interacts with insulin receptor/INSR; this interaction diminishes INSR autophosphorylation. Post-translationally, O-glycosylated by sialylated oligosaccharides. May be N-glycosylated. Expressed in cell lines derived from endothelial cells, embryonic fibroblasts and preadipocytes. Expressed in skeletal muscle by a subset of pericytes.

It is found in the membrane. In terms of biological role, cell surface glycoprotein involved in various biological processes including angiogenesis, immune response modulation, and tissue remodeling and repair. Participates in pericyte proliferation through positive modulation of the PDGF receptor signaling pathway. Acts as a scaffold for factor X, triggering allosteric changes and the spatial re-alignment of factor X with the TF-factor VIIa complex, thereby enhancing coagulation activation. Modulates the insulin signaling pathway by interacting with insulin receptor/INSR and by diminishing its capacity to be autophosphorylated in response to insulin. Also regulates LPS-induced inflammatory responses in macrophages by favoring production of proinflammatory cytokines. In Mus musculus (Mouse), this protein is Endosialin (Cd248).